Reading from the N-terminus, the 104-residue chain is Large ribosomal subunit protein uL24 (104 aa).

The protein belongs to the universal ribosomal protein uL24 family. In terms of assembly, part of the 50S ribosomal subunit.

Functionally, one of two assembly initiator proteins, it binds directly to the 5'-end of the 23S rRNA, where it nucleates assembly of the 50S subunit. In terms of biological role, one of the proteins that surrounds the polypeptide exit tunnel on the outside of the subunit. This is Large ribosomal subunit protein uL24 from Pseudomonas savastanoi pv. phaseolicola (strain 1448A / Race 6) (Pseudomonas syringae pv. phaseolicola (strain 1448A / Race 6)).